The chain runs to 126 residues: Nascent polypeptide-associated complex protein (126 aa).

The 68-residue stretch at 10 to 77 folds into the NAC-A/B domain; it reads PRMMKQMQKM…AKKVAKAEEK (68 aa).

This sequence belongs to the NAC-alpha family. Homodimer. Interacts with the ribosome. Binds ribosomal RNA.

In terms of biological role, contacts the emerging nascent chain on the ribosome. The polypeptide is Nascent polypeptide-associated complex protein (Methanococcus maripaludis (strain C5 / ATCC BAA-1333)).